Here is a 408-residue protein sequence, read N- to C-terminus: Arginine biosynthesis bifunctional protein ArgJ 1 (408 aa).

Substrate-binding residues include T154, K180, T191, E277, N403, and S408. Residue T191 is the Nucleophile of the active site.

It belongs to the ArgJ family. As to quaternary structure, heterotetramer of two alpha and two beta chains.

Its subcellular location is the cytoplasm. It carries out the reaction N(2)-acetyl-L-ornithine + L-glutamate = N-acetyl-L-glutamate + L-ornithine. The enzyme catalyses L-glutamate + acetyl-CoA = N-acetyl-L-glutamate + CoA + H(+). It functions in the pathway amino-acid biosynthesis; L-arginine biosynthesis; L-ornithine and N-acetyl-L-glutamate from L-glutamate and N(2)-acetyl-L-ornithine (cyclic): step 1/1. Its pathway is amino-acid biosynthesis; L-arginine biosynthesis; N(2)-acetyl-L-ornithine from L-glutamate: step 1/4. Functionally, catalyzes two activities which are involved in the cyclic version of arginine biosynthesis: the synthesis of N-acetylglutamate from glutamate and acetyl-CoA as the acetyl donor, and of ornithine by transacetylation between N(2)-acetylornithine and glutamate. The protein is Arginine biosynthesis bifunctional protein ArgJ 1 of Clostridium acetobutylicum (strain ATCC 824 / DSM 792 / JCM 1419 / IAM 19013 / LMG 5710 / NBRC 13948 / NRRL B-527 / VKM B-1787 / 2291 / W).